A 189-amino-acid polypeptide reads, in one-letter code: GMP synthase [glutamine-hydrolyzing] subunit A (189 aa).

Positions 1–189 (MIVILNNGGQ…CKKCGFEFEE (189 aa)) constitute a Glutamine amidotransferase type-1 domain. Residue cysteine 76 is the Nucleophile of the active site. Active-site residues include histidine 163 and glutamate 165.

Heterodimer composed of a glutamine amidotransferase subunit (A) and a GMP-binding subunit (B).

The enzyme catalyses XMP + L-glutamine + ATP + H2O = GMP + L-glutamate + AMP + diphosphate + 2 H(+). Its pathway is purine metabolism; GMP biosynthesis; GMP from XMP (L-Gln route): step 1/1. Catalyzes the synthesis of GMP from XMP. The chain is GMP synthase [glutamine-hydrolyzing] subunit A from Methanococcus maripaludis (strain C7 / ATCC BAA-1331).